Reading from the N-terminus, the 337-residue chain is Interferon gamma receptor 2 (337 aa).

A signal peptide spans 1–21 (MRPTLLWSLLLLLGVFAAAAA). Residues 28 to 247 (SQLPAPQHPK…MADASTELQQ (220 aa)) lie on the Extracellular side of the membrane. The 99-residue stretch at 31–129 (PAPQHPKIRL…GALHSAWVTM (99 aa)) folds into the Fibronectin type-III 1 domain. Asn-56 and Asn-85 each carry an N-linked (GlcNAc...) asparagine glycan. An intrachain disulfide couples Cys-86 to Cys-94. 4 N-linked (GlcNAc...) asparagine glycosylation sites follow: Asn-110, Asn-137, Asn-219, and Asn-231. Residues 142–240 (PPENIEVTPG…NISCYETMAD (99 aa)) enclose the Fibronectin type-III 2 domain. Cys-209 and Cys-234 are disulfide-bonded. The chain crosses the membrane as a helical span at residues 248-268 (VILISVGTFSLLSVLAGACFF). Residues 269-337 (LVLKYRGLIK…KEQEDVLQTL (69 aa)) are Cytoplasmic-facing. Residues 276–277 (LI) carry the Dileucine internalization motif motif.

This sequence belongs to the type II cytokine receptor family. As to quaternary structure, heterodimer with IFNGR1, to form the IFNG receptor complex. Interacts (via intracellular domain) with JAK2. In terms of tissue distribution, expressed in T-cells (at protein level).

It localises to the cell membrane. It is found in the cytoplasmic vesicle membrane. Its subcellular location is the golgi apparatus membrane. The protein localises to the endoplasmic reticulum membrane. The protein resides in the cytoplasm. Its function is as follows. Associates with IFNGR1 to form a receptor for the cytokine interferon gamma (IFNG). Ligand binding stimulates activation of the JAK/STAT signaling pathway. Required for signal transduction in contrast to other receptor subunit responsible for ligand binding. In Homo sapiens (Human), this protein is Interferon gamma receptor 2.